The chain runs to 110 residues: MTSIAKAFVEKAISNNPVTVFSKSFCPFCKAAKNTLTKYSAPYKAYELDKIENGSDIQAYLHEKTKQSTVPSIFFRNQFIGGNSDLNKLRSSGTLTKMIAELKENKSSIL.

The Glutaredoxin domain occupies 6–106 (KAFVEKAISN…KMIAELKENK (101 aa)). A disulfide bridge connects residues C26 and C29.

This sequence belongs to the glutaredoxin family.

Its function is as follows. The disulfide bond functions as an electron carrier in the glutathione-dependent synthesis of deoxyribonucleotides by the enzyme ribonucleotide reductase. In addition, it is also involved in reducing some disulfides in a coupled system with glutathione reductase. Thioltransferase catalyzes cellular thiol-disulfide transhydrogenation reactions. It transfers reducing equivalents to cytosolic protein and nonprotein disulfides. The sequence is that of Glutaredoxin-2 (grx2) from Schizosaccharomyces pombe (strain 972 / ATCC 24843) (Fission yeast).